Here is a 248-residue protein sequence, read N- to C-terminus: Probable phosphatase VCM66_A0854 (248 aa).

His8, His10, His16, His41, Glu74, His102, His132, Asp194, and His196 together coordinate Zn(2+).

It belongs to the PHP family. Zn(2+) serves as cofactor.

This is Probable phosphatase VCM66_A0854 from Vibrio cholerae serotype O1 (strain M66-2).